We begin with the raw amino-acid sequence, 820 residues long: Chitinase A (820 aa).

Positions 1 to 21 are cleaved as a signal peptide; it reads MKLNKITSYIGFALLSGGALA. The 431-residue stretch at 158–588 folds into the GH18 domain; that stretch reads RVTGAYFVEW…NAMYDGLTAG (431 aa). The active-site Proton donor is Glu-313.

It belongs to the glycosyl hydrolase 18 family. Chitinase class II subfamily.

The catalysed reaction is Random endo-hydrolysis of N-acetyl-beta-D-glucosaminide (1-&gt;4)-beta-linkages in chitin and chitodextrins.. With respect to regulation, stimulated by magnesium ions; inhibited by N-bromosuccinimide and 2-hydroxy-5-nitrobenzyl bromide. The sequence is that of Chitinase A (chiA) from Pseudoalteromonas piscicida.